The chain runs to 166 residues: UPF0336 protein MT0525.1 (166 aa).

One can recognise a MaoC-like domain in the interval 8 to 131 (QTLIGKHYRA…VLAEIRSEVT (124 aa)).

The protein belongs to the UPF0336 family.

The polypeptide is UPF0336 protein MT0525.1 (Mycobacterium tuberculosis (strain CDC 1551 / Oshkosh)).